We begin with the raw amino-acid sequence, 205 residues long: Listeria nuclear targeted protein A (205 aa).

A signal peptide spans 1 to 36 (MKKLVAWFNGLSKMWKVVVIIGAVFVVIIALTTGED).

Interacts specifically with host BAHD1.

Its subcellular location is the secreted. The protein resides in the host nucleus. In terms of biological role, relieves the repression of host cell immune response genes (interferon-stimulated genes) by blocking the recruitment of host BAHD1 to these genes. May modulate interferon-mediated immune response to control bacterial colonization of the host. The sequence is that of Listeria nuclear targeted protein A (lntA) from Listeria monocytogenes serovar 1/2a (strain ATCC BAA-679 / EGD-e).